We begin with the raw amino-acid sequence, 179 residues long: Large ribosomal subunit protein uL5 (179 aa).

It belongs to the universal ribosomal protein uL5 family. As to quaternary structure, part of the 50S ribosomal subunit; part of the 5S rRNA/L5/L18/L25 subcomplex. Contacts the 5S rRNA and the P site tRNA. Forms a bridge to the 30S subunit in the 70S ribosome.

This is one of the proteins that bind and probably mediate the attachment of the 5S RNA into the large ribosomal subunit, where it forms part of the central protuberance. In the 70S ribosome it contacts protein S13 of the 30S subunit (bridge B1b), connecting the 2 subunits; this bridge is implicated in subunit movement. Contacts the P site tRNA; the 5S rRNA and some of its associated proteins might help stabilize positioning of ribosome-bound tRNAs. In Polaromonas naphthalenivorans (strain CJ2), this protein is Large ribosomal subunit protein uL5.